A 453-amino-acid polypeptide reads, in one-letter code: Bifunctional protein GlmU (453 aa).

Residues methionine 1–arginine 228 form a pyrophosphorylase region. UDP-N-acetyl-alpha-D-glucosamine contacts are provided by residues lysine 23, glutamine 73, glycine 78–threonine 79, serine 100–aspartate 102, glycine 139, glutamate 153, asparagine 168, and asparagine 226. Aspartate 102 contacts Mg(2+). Asparagine 226 contributes to the Mg(2+) binding site. Residues alanine 229–glutamate 249 are linker. The segment at glycine 250–lysine 453 is N-acetyltransferase. 2 residues coordinate UDP-N-acetyl-alpha-D-glucosamine: arginine 331 and lysine 349. Histidine 361 serves as the catalytic Proton acceptor. Residues tyrosine 364 and asparagine 375 each contribute to the UDP-N-acetyl-alpha-D-glucosamine site. Acetyl-CoA contacts are provided by residues alanine 378, asparagine 384–tyrosine 385, serine 403, alanine 421, and arginine 438.

The protein in the N-terminal section; belongs to the N-acetylglucosamine-1-phosphate uridyltransferase family. It in the C-terminal section; belongs to the transferase hexapeptide repeat family. As to quaternary structure, homotrimer. Mg(2+) serves as cofactor.

It localises to the cytoplasm. The catalysed reaction is alpha-D-glucosamine 1-phosphate + acetyl-CoA = N-acetyl-alpha-D-glucosamine 1-phosphate + CoA + H(+). It catalyses the reaction N-acetyl-alpha-D-glucosamine 1-phosphate + UTP + H(+) = UDP-N-acetyl-alpha-D-glucosamine + diphosphate. Its pathway is nucleotide-sugar biosynthesis; UDP-N-acetyl-alpha-D-glucosamine biosynthesis; N-acetyl-alpha-D-glucosamine 1-phosphate from alpha-D-glucosamine 6-phosphate (route II): step 2/2. It participates in nucleotide-sugar biosynthesis; UDP-N-acetyl-alpha-D-glucosamine biosynthesis; UDP-N-acetyl-alpha-D-glucosamine from N-acetyl-alpha-D-glucosamine 1-phosphate: step 1/1. It functions in the pathway bacterial outer membrane biogenesis; LPS lipid A biosynthesis. In terms of biological role, catalyzes the last two sequential reactions in the de novo biosynthetic pathway for UDP-N-acetylglucosamine (UDP-GlcNAc). The C-terminal domain catalyzes the transfer of acetyl group from acetyl coenzyme A to glucosamine-1-phosphate (GlcN-1-P) to produce N-acetylglucosamine-1-phosphate (GlcNAc-1-P), which is converted into UDP-GlcNAc by the transfer of uridine 5-monophosphate (from uridine 5-triphosphate), a reaction catalyzed by the N-terminal domain. In Desulfitobacterium hafniense (strain Y51), this protein is Bifunctional protein GlmU.